The chain runs to 238 residues: Oxidoreductase dmxR7 (238 aa).

It belongs to the avfA family.

It participates in secondary metabolite biosynthesis. In terms of biological role, oxidoreductase; part of the gene cluster that mediates the biosynthesis of the dimeric xanthones cryptosporioptides. The pathway begins with the synthesis of atrochrysone thioester by the polyketide synthase dmx-nrPKS. The atrochrysone carboxyl ACP thioesterase dmxR1 then breaks the thioester bond and releases the atrochrysone carboxylic acid from dmx-nrPKS. Atrochrysone carboxylic acid is decarboxylated by the decarboxylase dmxR15, and oxidized by the anthrone oxygenase dmxR16 to yield emodin. Emodin is then reduced to emodin hydroquinone by the oxidoreductase dmxR7. A-ring reduction by the short chain dehydrogenase dmxR18, dehydration by the scytalone dehydratase-like protein dmxR17 and probable spontaneous re-oxidation, results in overall deoxygenation to chrysophanol. Baeyer-Villiger oxidation by the Baeyer-Villiger monooxygenase (BVMO) dmxR6 then yields monodictylactone in equilibrium with monodictyphenone. In the case of the cryptosporioptides biosynthesis, monodictylactone is reduced at C-12 to an alcohol (by the short chain dehydrogenases dmxR12 or dmxR8) and hydroxylated at C-5 by dmxR9, yielding the electron-rich aromatic which could eliminate H(2)O to form the ortho-quinonemethide, followed by tautomerisation to paraquinone and complete the formal reduction to produce the 10-methylgroup. Conjugate addition of C-4a-OH to the resulting paraquinone by the monooxygenase dmxR10 then gives cyclohexadienone, which is then reduced at C-5 by the short chain dehydrogenase dmxR3 to give the dihydroxanthone. The 6,7-epoxide in the cryptosporioptides could be introduced by the cytochrome P450 monooxygenase dmxL3. The highly reducing PKS dmxL2 manufactures butyrate, which is further carboxylated by dmxL1 to form ethylmalonate. It is not yet clear whether the carboxylation occurs while the butyrate is attached to the ACP of dmxL2, but this unusual fungal metabolite could then be esterified to O-5 by the O-acetyltransferase dmxR13. Finally, dimerization performed by dmxR5 gives the observed dimers cryptosporioptides A, B and C as the final products of the pathway. In Cryptosporiopsis sp. (strain 8999), this protein is Oxidoreductase dmxR7.